Consider the following 863-residue polypeptide: Penicillin-binding protein 1A (863 aa).

The Cytoplasmic portion of the chain corresponds to 1-28; the sequence is MTENRDNKTSQSEKTTQKKKKKKFKAFK. A helical; Signal-anchor for type II membrane protein membrane pass occupies residues 29–49; it reads IILITFITLIVISLVTAIGIT. Residues 50-863 are Extracellular-facing; sequence LAIIKTSPDI…KPIIRPKKHF (814 aa). The transglycosylase stretch occupies residues 71-248; that stretch reads SKIYDDKGEL…PSVYYPYSRT (178 aa). The active-site Proton donor; for transglycosylase activity is the Glu110. The interval 392-674 is transpeptidase; sequence ASAVLTDYHT…AAALFGKIMN (283 aa). Ser431 serves as the catalytic Acyl-ester intermediate; for transpeptidase activity. The segment at 774–863 is disordered; the sequence is DDDMYVLPDK…KPIIRPKKHF (90 aa). Polar residues predominate over residues 808 to 836; the sequence is EDATNEASTEPSPNTDTVPEDSTNNLDPT. Residues 837–846 show a composition bias toward basic and acidic residues; it reads KNTEKKPSDK. Residues 847–863 are compositionally biased toward basic residues; sequence KNKKHVIKPIIRPKKHF.

It in the N-terminal section; belongs to the glycosyltransferase 51 family. The protein in the C-terminal section; belongs to the transpeptidase family.

It is found in the cell membrane. The enzyme catalyses [GlcNAc-(1-&gt;4)-Mur2Ac(oyl-L-Ala-gamma-D-Glu-L-Lys-D-Ala-D-Ala)](n)-di-trans,octa-cis-undecaprenyl diphosphate + beta-D-GlcNAc-(1-&gt;4)-Mur2Ac(oyl-L-Ala-gamma-D-Glu-L-Lys-D-Ala-D-Ala)-di-trans,octa-cis-undecaprenyl diphosphate = [GlcNAc-(1-&gt;4)-Mur2Ac(oyl-L-Ala-gamma-D-Glu-L-Lys-D-Ala-D-Ala)](n+1)-di-trans,octa-cis-undecaprenyl diphosphate + di-trans,octa-cis-undecaprenyl diphosphate + H(+). The catalysed reaction is Preferential cleavage: (Ac)2-L-Lys-D-Ala-|-D-Ala. Also transpeptidation of peptidyl-alanyl moieties that are N-acyl substituents of D-alanine.. It participates in cell wall biogenesis; peptidoglycan biosynthesis. Its function is as follows. Cell wall formation. Synthesis of cross-linked peptidoglycan from the lipid intermediates. The enzyme has a penicillin-insensitive transglycosylase N-terminal domain (formation of linear glycan strands) and a penicillin-sensitive transpeptidase C-terminal domain (cross-linking of the peptide subunits). The protein is Penicillin-binding protein 1A (pbpA) of Clostridium novyi (strain NT).